The chain runs to 94 residues: Small ribosomal subunit protein uS19 (94 aa).

The disordered stretch occupies residues 73 to 94; that stretch reads EFAPTRTYRGHGKDAERTTRRR. The span at 83 to 94 shows a compositional bias: basic and acidic residues; it reads HGKDAERTTRRR.

It belongs to the universal ribosomal protein uS19 family.

Protein S19 forms a complex with S13 that binds strongly to the 16S ribosomal RNA. The chain is Small ribosomal subunit protein uS19 from Thermomicrobium roseum (strain ATCC 27502 / DSM 5159 / P-2).